Here is a 309-residue protein sequence, read N- to C-terminus: HPr kinase/phosphorylase (309 aa).

Residues His-138 and Lys-159 contribute to the active site. 153–160 (GQSGVGKS) contributes to the ATP binding site. Ser-160 contributes to the Mg(2+) binding site. The Proton acceptor; for phosphorylation activity. Proton donor; for dephosphorylation activity role is filled by Asp-177. An important for the catalytic mechanism of both phosphorylation and dephosphorylation region spans residues 201–210 (LEIRGLGIIN). Glu-202 lines the Mg(2+) pocket. The active site involves Arg-243. An important for the catalytic mechanism of dephosphorylation region spans residues 264 to 269 (PVRPGR).

The protein belongs to the HPrK/P family. In terms of assembly, homohexamer. Requires Mg(2+) as cofactor.

It carries out the reaction [HPr protein]-L-serine + ATP = [HPr protein]-O-phospho-L-serine + ADP + H(+). It catalyses the reaction [HPr protein]-O-phospho-L-serine + phosphate + H(+) = [HPr protein]-L-serine + diphosphate. Functionally, catalyzes the ATP- as well as the pyrophosphate-dependent phosphorylation of a specific serine residue in HPr, a phosphocarrier protein of the phosphoenolpyruvate-dependent sugar phosphotransferase system (PTS). HprK/P also catalyzes the pyrophosphate-producing, inorganic phosphate-dependent dephosphorylation (phosphorolysis) of seryl-phosphorylated HPr (P-Ser-HPr). The two antagonistic activities of HprK/P are regulated by several intracellular metabolites, which change their concentration in response to the absence or presence of rapidly metabolisable carbon sources (glucose, fructose, etc.) in the growth medium. Also phosphorylates/dephosphorylates the HPr-like catabolite repression protein crh on a specific serine residue. Therefore, by controlling the phosphorylation state of HPr and crh, HPrK/P is a sensor enzyme that plays a major role in the regulation of carbon metabolism and sugar transport: it mediates carbon catabolite repression (CCR), and regulates PTS-catalyzed carbohydrate uptake and inducer exclusion. This chain is HPr kinase/phosphorylase, found in Bacillus cereus (strain G9842).